An 885-amino-acid polypeptide reads, in one-letter code: Alanine--tRNA ligase (885 aa).

Residues His564, His568, Cys676, and His680 each contribute to the Zn(2+) site.

The protein belongs to the class-II aminoacyl-tRNA synthetase family. Zn(2+) is required as a cofactor.

It is found in the cytoplasm. It catalyses the reaction tRNA(Ala) + L-alanine + ATP = L-alanyl-tRNA(Ala) + AMP + diphosphate. Catalyzes the attachment of alanine to tRNA(Ala) in a two-step reaction: alanine is first activated by ATP to form Ala-AMP and then transferred to the acceptor end of tRNA(Ala). Also edits incorrectly charged Ser-tRNA(Ala) and Gly-tRNA(Ala) via its editing domain. In Brucella abortus (strain 2308), this protein is Alanine--tRNA ligase.